A 361-amino-acid chain; its full sequence is Peptide chain release factor 1 (361 aa).

N5-methylglutamine is present on Gln-238.

The protein belongs to the prokaryotic/mitochondrial release factor family. Post-translationally, methylated by PrmC. Methylation increases the termination efficiency of RF1.

It localises to the cytoplasm. In terms of biological role, peptide chain release factor 1 directs the termination of translation in response to the peptide chain termination codons UAG and UAA. The protein is Peptide chain release factor 1 of Mesomycoplasma hyopneumoniae (strain 7448) (Mycoplasma hyopneumoniae).